Here is a 148-residue protein sequence, read N- to C-terminus: 3-dehydroquinate dehydratase (148 aa).

Y23 functions as the Proton acceptor in the catalytic mechanism. Residues N75, H81, and D88 each coordinate substrate. The Proton donor role is filled by H101. Residues 102–103 and R112 each bind substrate; that span reads LS.

It belongs to the type-II 3-dehydroquinase family. As to quaternary structure, homododecamer.

It catalyses the reaction 3-dehydroquinate = 3-dehydroshikimate + H2O. Its pathway is metabolic intermediate biosynthesis; chorismate biosynthesis; chorismate from D-erythrose 4-phosphate and phosphoenolpyruvate: step 3/7. In terms of biological role, catalyzes a trans-dehydration via an enolate intermediate. The chain is 3-dehydroquinate dehydratase from Xanthomonas oryzae pv. oryzae (strain MAFF 311018).